The sequence spans 461 residues: Ribulose bisphosphate carboxylase (461 aa).

Substrate is bound at residue Asn-112. Catalysis depends on Lys-167, which acts as the Proton acceptor. Residue Lys-169 participates in substrate binding. 3 residues coordinate Mg(2+): Lys-192, Asp-194, and Glu-195. The residue at position 192 (Lys-192) is an N6-carboxylysine. His-288 serves as the catalytic Proton acceptor. The substrate site is built by Arg-289, His-322, and Ser-369.

It belongs to the RuBisCO large chain family. Type II subfamily. In terms of assembly, homodimer. The cofactor is Mg(2+).

The enzyme catalyses 2 (2R)-3-phosphoglycerate + 2 H(+) = D-ribulose 1,5-bisphosphate + CO2 + H2O. It catalyses the reaction D-ribulose 1,5-bisphosphate + O2 = 2-phosphoglycolate + (2R)-3-phosphoglycerate + 2 H(+). In terms of biological role, ruBisCO catalyzes two reactions: the carboxylation of D-ribulose 1,5-bisphosphate, the primary event in carbon dioxide fixation, as well as the oxidative fragmentation of the pentose substrate. Both reactions occur simultaneously and in competition at the same active site. The protein is Ribulose bisphosphate carboxylase of Rhodopseudomonas palustris (strain HaA2).